The chain runs to 253 residues: HTH-type transcriptional regulator AdiY (253 aa).

The region spanning 149-246 (DSVYQIIESD…GMTPLHYVSQ (98 aa)) is the HTH araC/xylS-type domain. 2 DNA-binding regions (H-T-H motif) span residues 166–187 (SMVASCLCLSPSLLKKKLKSEN) and 213–236 (ISQVSQSCGYNSTSYFISVFKDFY).

The sequence is that of HTH-type transcriptional regulator AdiY (adiY) from Escherichia coli (strain K12).